A 387-amino-acid chain; its full sequence is Gamma-butyrobetaine dioxygenase (387 aa).

Zn(2+)-binding residues include Cys38, Cys40, Cys43, and His82. His202, Asp204, and His347 together coordinate Fe cation. Ser351 is subject to Phosphoserine.

The protein belongs to the gamma-BBH/TMLD family. Fe(2+) serves as cofactor. Requires L-ascorbate as cofactor. In terms of tissue distribution, highly expressed in kidney; moderately expressed in liver; very low expression in brain.

The protein localises to the cytoplasm. It carries out the reaction 4-(trimethylamino)butanoate + 2-oxoglutarate + O2 = carnitine + succinate + CO2. Its pathway is amine and polyamine biosynthesis; carnitine biosynthesis. Functionally, catalyzes the formation of L-carnitine from gamma-butyrobetaine. In Homo sapiens (Human), this protein is Gamma-butyrobetaine dioxygenase (BBOX1).